A 258-amino-acid chain; its full sequence is Translocon-associated protein subunit alpha (258 aa).

A signal peptide spans 1 to 24 (MMNLRVLFLALLLLASPLLQVARC). Over 25–190 (QSDAEDHSSL…ESGGLLSGES (166 aa)) the chain is Lumenal. Residues Asn57, Asn119, and Asn127 are each glycosylated (N-linked (GlcNAc...) asparagine). The chain crosses the membrane as a helical span at residues 191–209 (VFLLTLGIGLLLLLGLWAY). At 210-258 (SQVQRLTKKTKKVSKVEVGTRSTEASLDEWLEGTTLAKTSSGKTKNKKN) the chain is on the cytoplasmic side.

The protein belongs to the TRAP-alpha family. In terms of assembly, heterotetramer of TRAP-alpha, TRAP-beta, TRAP-delta and TRAP-gamma. Phosphorylated in its cytoplasmic tail.

It localises to the endoplasmic reticulum membrane. Functionally, TRAP proteins are part of a complex whose function is to bind calcium to the ER membrane and thereby regulate the retention of ER resident proteins. May be involved in the recycling of the translocation apparatus after completion of the translocation process or may function as a membrane-bound chaperone facilitating folding of translocated proteins. In Arabidopsis thaliana (Mouse-ear cress), this protein is Translocon-associated protein subunit alpha.